We begin with the raw amino-acid sequence, 130 residues long: Immunoglobulin kappa chain variable 9-120 (130 aa).

The first 22 residues, 1–22 (MDMRAPAQIFGFLLLLFQGTRC), serve as a signal peptide directing secretion. The segment at 23 to 45 (DIQMTQSPSSLSASLGERVSLTC) is framework-1. The cysteines at positions 45 and 110 are disulfide-linked. Residues 46–56 (RASQDIGSSLN) form a complementarity-determining-1 region. The segment at 57–71 (WLQQEPDGTIKRLIY) is framework-2. The interval 72-78 (ATSSLDS) is complementarity-determining-2. The tract at residues 79–110 (GVPKRFSGSRSGSDYSLTISSLESEDFVDYYC) is framework-3. The segment at 111-119 (LQYASSPWT) is complementarity-determining-3. Residues 120-129 (FGGGTKLEIK) are framework-4.

This Mus musculus (Mouse) protein is Immunoglobulin kappa chain variable 9-120.